A 379-amino-acid polypeptide reads, in one-letter code: Putative acetyl-CoA C-acetyltransferase VraB (379 aa).

The active-site Acyl-thioester intermediate is C86. H338 serves as the catalytic Proton acceptor.

It belongs to the thiolase-like superfamily. Thiolase family.

In Staphylococcus aureus (strain COL), this protein is Putative acetyl-CoA C-acetyltransferase VraB (vraB).